Consider the following 341-residue polypeptide: L-threonine 3-dehydrogenase (341 aa).

Position 38 (Cys-38) interacts with Zn(2+). Active-site charge relay system residues include Thr-40 and His-43. Zn(2+)-binding residues include His-63, Glu-64, Cys-93, Cys-96, Cys-99, and Cys-107. NAD(+) is bound by residues Ile-175, Asp-195, Arg-200, 262 to 264 (LGI), and 286 to 287 (IY).

It belongs to the zinc-containing alcohol dehydrogenase family. Homotetramer. Zn(2+) serves as cofactor.

It is found in the cytoplasm. The enzyme catalyses L-threonine + NAD(+) = (2S)-2-amino-3-oxobutanoate + NADH + H(+). It functions in the pathway amino-acid degradation; L-threonine degradation via oxydo-reductase pathway; glycine from L-threonine: step 1/2. Catalyzes the NAD(+)-dependent oxidation of L-threonine to 2-amino-3-ketobutyrate. The sequence is that of L-threonine 3-dehydrogenase from Yersinia enterocolitica serotype O:8 / biotype 1B (strain NCTC 13174 / 8081).